We begin with the raw amino-acid sequence, 458 residues long: tRNA(Ile)-lysidine synthase (458 aa).

36-41 (SGGADS) is a binding site for ATP.

This sequence belongs to the tRNA(Ile)-lysidine synthase family.

The protein localises to the cytoplasm. It catalyses the reaction cytidine(34) in tRNA(Ile2) + L-lysine + ATP = lysidine(34) in tRNA(Ile2) + AMP + diphosphate + H(+). Ligates lysine onto the cytidine present at position 34 of the AUA codon-specific tRNA(Ile) that contains the anticodon CAU, in an ATP-dependent manner. Cytidine is converted to lysidine, thus changing the amino acid specificity of the tRNA from methionine to isoleucine. The sequence is that of tRNA(Ile)-lysidine synthase from Protochlamydia amoebophila (strain UWE25).